A 381-amino-acid chain; its full sequence is 3-dehydroquinate synthase (381 aa).

Residues 81–86, 115–119, 139–140, Lys-152, and Lys-161 contribute to the NAD(+) site; these read EGESSK, GVIGD, and TS. Glu-194, His-256, and His-274 together coordinate Zn(2+).

The protein belongs to the sugar phosphate cyclases superfamily. Dehydroquinate synthase family. Requires Co(2+) as cofactor. The cofactor is Zn(2+). NAD(+) is required as a cofactor.

It is found in the cytoplasm. It catalyses the reaction 7-phospho-2-dehydro-3-deoxy-D-arabino-heptonate = 3-dehydroquinate + phosphate. It functions in the pathway metabolic intermediate biosynthesis; chorismate biosynthesis; chorismate from D-erythrose 4-phosphate and phosphoenolpyruvate: step 2/7. Functionally, catalyzes the conversion of 3-deoxy-D-arabino-heptulosonate 7-phosphate (DAHP) to dehydroquinate (DHQ). This chain is 3-dehydroquinate synthase, found in Rhodopseudomonas palustris (strain TIE-1).